Here is a 400-residue protein sequence, read N- to C-terminus: Sphingosine 1-phosphate receptor 5 (400 aa).

At 1–41 (MEPGLLRPAPVSEVIVLHYNYTGKLRGARYQPGAGLRADAA) the chain is on the extracellular side. N20 carries N-linked (GlcNAc...) asparagine glycosylation. Residues 42-62 (VCLAVCAFIVLENLAVLLVLV) form a helical membrane-spanning segment. Topologically, residues 63-68 (RHPRFH) are cytoplasmic. The helical transmembrane segment at 69–89 (APMFLLLGSLTLSDLLAGAAY) threads the bilayer. Over 90-111 (ATNILLSGPLTLRLSPALWFAR) the chain is Extracellular. Residues 112-132 (EGGVFVALAASVLSLLAIALE) traverse the membrane as a helical segment. The Cytoplasmic segment spans residues 133–151 (RHLTMARRGPAPAASRART). The helical transmembrane segment at 152–172 (LAMAVAAWGASLLLGLLPALG) threads the bilayer. The Extracellular segment spans residues 173 to 192 (WNCLGRLETCSTVLPLYAKA). Residues 193–213 (YVLFCVLAFLGILAAICALYA) traverse the membrane as a helical segment. Topologically, residues 214-253 (RIYCQVRANARRLRAGPGSRRATSSSRSRHTPRSLALLRT) are cytoplasmic. The helical transmembrane segment at 254–274 (LSVVLLAFVACWGPLFLLLLL) threads the bilayer. At 275 to 288 (DVACPARACPVLLQ) the chain is on the extracellular side. A helical membrane pass occupies residues 289 to 309 (ADPFLGLAMANSLLNPIIYTF). The Cytoplasmic segment spans residues 310-400 (TNRDLRHALL…NRSLVPTATD (91 aa)). C324 carries S-palmitoyl cysteine lipidation. A disordered region spans residues 331 to 400 (QDSSNSLQRS…NRSLVPTATD (70 aa)). 3 positions are modified to phosphoserine: S340, S342, and S384. A compositionally biased stretch (polar residues) spans 360–400 (DRSSSPSEHLSPQQDGVDTSCSTGSPGVATANRSLVPTATD).

Belongs to the G-protein coupled receptor 1 family. Expressed in spleen and brain. In the CNS expression is restricted to oligodendrocytes.

It is found in the cell membrane. Functionally, receptor for the lysosphingolipid sphingosine 1-phosphate (S1P). S1P is a bioactive lysophospholipid that elicits diverse physiological effect on most types of cells and tissues. Is coupled to both the G(i/0)alpha and G(12) subclass of heteromeric G-proteins. S1P activation on oligodendroglial cells modulates two distinct functional pathways mediating either process retraction or cell survival. S1P activation on O4-positive pre-oligodendrocytes induces process retraction via a Rho kinase/collapsin response-mediated protein signaling pathway. The S1P-induced survival of mature oligodendrocytes is mediated through a pertussis toxin-sensitive, Akt-dependent pathway. S1P activation on oligodendroglial cells modulates two distinct functional pathways mediating either process retraction or cell survival. These effects depend on the developmental stage of the cell. In Mus musculus (Mouse), this protein is Sphingosine 1-phosphate receptor 5 (S1pr5).